A 160-amino-acid chain; its full sequence is Cytochrome c-type biogenesis protein CcmE (160 aa).

Residues 1–7 lie on the Cytoplasmic side of the membrane; that stretch reads MTRKQRR. A helical; Signal-anchor for type II membrane protein transmembrane segment spans residues 8-28; it reads ATFIAVSLGILALAVGLVLYA. The Periplasmic portion of the chain corresponds to 29–160; the sequence is MRDSIVYFYS…SETYGQGSYP (132 aa). H122 and Y126 together coordinate heme. The segment at 141–160 is disordered; sequence WQGEGAEAPHSETYGQGSYP.

Belongs to the CcmE/CycJ family.

The protein localises to the cell inner membrane. Functionally, heme chaperone required for the biogenesis of c-type cytochromes. Transiently binds heme delivered by CcmC and transfers the heme to apo-cytochromes in a process facilitated by CcmF and CcmH. The chain is Cytochrome c-type biogenesis protein CcmE from Parvibaculum lavamentivorans (strain DS-1 / DSM 13023 / NCIMB 13966).